Here is a 90-residue protein sequence, read N- to C-terminus: Probable Fe(2+)-trafficking protein (90 aa).

It belongs to the Fe(2+)-trafficking protein family.

Its function is as follows. Could be a mediator in iron transactions between iron acquisition and iron-requiring processes, such as synthesis and/or repair of Fe-S clusters in biosynthetic enzymes. The polypeptide is Probable Fe(2+)-trafficking protein (Hydrogenovibrio crunogenus (strain DSM 25203 / XCL-2) (Thiomicrospira crunogena)).